The chain runs to 41 residues: U-megalopygitoxin(11)-Mo28 (41 aa).

The N-terminal stretch at 1 to 29 (MRTTLLLLIIAITVMVFVSEAYAAPAPEP) is a signal peptide.

It belongs to the caterpillar 11 family. Expressed by the venom apparatus.

The protein localises to the secreted. In terms of biological role, probable toxin. In Megalopyge opercularis (Southern flannel moth), this protein is U-megalopygitoxin(11)-Mo28.